A 248-amino-acid polypeptide reads, in one-letter code: Cell division protein FtsQ (248 aa).

Topologically, residues 1–4 (MGTR) are cytoplasmic. A helical transmembrane segment spans residues 5 to 25 (LRALLGVLILLVLGGAGWLFL). The Periplasmic portion of the chain corresponds to 26 to 248 (RWEPTLLPIR…RVAARAGNRR (223 aa)). The POTRA domain maps to 32-101 (LPIRLIQIEG…DTLRVQVREY (70 aa)).

It belongs to the FtsQ/DivIB family. FtsQ subfamily. Part of a complex composed of FtsB, FtsL and FtsQ.

It is found in the cell inner membrane. In terms of biological role, essential cell division protein. May link together the upstream cell division proteins, which are predominantly cytoplasmic, with the downstream cell division proteins, which are predominantly periplasmic. May control correct divisome assembly. The protein is Cell division protein FtsQ of Allochromatium vinosum (strain ATCC 17899 / DSM 180 / NBRC 103801 / NCIMB 10441 / D) (Chromatium vinosum).